An 801-amino-acid polypeptide reads, in one-letter code: Phenylalanine--tRNA ligase beta subunit (801 aa).

Residues 39–153 (ADGLSKLVVG…EEAVPGDAIF (115 aa)) form the tRNA-binding domain. Positions 406 to 481 (TEPVEVSTSL…RIYGYDKLPT (76 aa)) constitute a B5 domain. The Mg(2+) site is built by Asp459, Asp465, Glu468, and Glu469. Residues 708 to 801 (TKFPAMTRDV…LTEQVGAEVR (94 aa)) enclose the FDX-ACB domain.

The protein belongs to the phenylalanyl-tRNA synthetase beta subunit family. Type 1 subfamily. In terms of assembly, tetramer of two alpha and two beta subunits. Requires Mg(2+) as cofactor.

It is found in the cytoplasm. It catalyses the reaction tRNA(Phe) + L-phenylalanine + ATP = L-phenylalanyl-tRNA(Phe) + AMP + diphosphate + H(+). The chain is Phenylalanine--tRNA ligase beta subunit from Streptococcus pyogenes serotype M1.